The following is a 443-amino-acid chain: Probable glycine dehydrogenase (decarboxylating) subunit 1 (443 aa).

This sequence belongs to the GcvP family. N-terminal subunit subfamily. In terms of assembly, the glycine cleavage system is composed of four proteins: P, T, L and H. In this organism, the P 'protein' is a heterodimer of two subunits.

It catalyses the reaction N(6)-[(R)-lipoyl]-L-lysyl-[glycine-cleavage complex H protein] + glycine + H(+) = N(6)-[(R)-S(8)-aminomethyldihydrolipoyl]-L-lysyl-[glycine-cleavage complex H protein] + CO2. In terms of biological role, the glycine cleavage system catalyzes the degradation of glycine. The P protein binds the alpha-amino group of glycine through its pyridoxal phosphate cofactor; CO(2) is released and the remaining methylamine moiety is then transferred to the lipoamide cofactor of the H protein. The protein is Probable glycine dehydrogenase (decarboxylating) subunit 1 of Chloroherpeton thalassium (strain ATCC 35110 / GB-78).